We begin with the raw amino-acid sequence, 251 residues long: uncharacterized protein (251 aa).

This is an uncharacterized protein from Methanothermus fervidus.